Consider the following 652-residue polypeptide: Gametogenetin (652 aa).

Disordered regions lie at residues 1–39 (MGNL…MTSQ), 52–237 (PGSA…DSES), 251–273 (PSLA…GGGG), 291–473 (QGPL…GHKE), and 488–576 (LAAD…GAAN). Composition is skewed to basic and acidic residues over residues 18–30 (QPSD…RRTS) and 124–133 (RLLEASHRGQ). The tract at residues 123 to 486 (RRLLEASHRG…APTAAPALPP (364 aa)) is interaction with GGNBP1. Composition is skewed to pro residues over residues 138–149 (SLRPLKPPPPPR) and 163–178 (QFPP…PPLP). The span at 201–212 (ESQAGPRNQGQT) shows a compositional bias: polar residues. 3 stretches are compositionally biased toward low complexity: residues 213–230 (AGRA…GEMA), 251–267 (PSLA…AKAS), and 299–312 (ARPL…AQEA). A Phosphoserine modification is found at serine 389. The span at 407-422 (APALLAPPTFIFPAPT) shows a compositional bias: low complexity. 2 stretches are compositionally biased toward pro residues: residues 428-466 (RPGP…PPLT) and 495-513 (APSP…PVSA). Residues 491–652 (DQAPAPSPAP…HYDLQATHSN (162 aa)) are interactions with ZNF403/GGNBP2 and OAZ3. Over residues 523 to 532 (TRTRRNKGSR) the composition is skewed to basic residues. Residues 538 to 552 (TRKDGLHGDGPRERA) show a composition bias toward basic and acidic residues.

In terms of assembly, interacts with FANCL, GGNBP1 and ZNF403/GGNBP2.

In terms of biological role, may be involved in spermatogenesis. In Homo sapiens (Human), this protein is Gametogenetin (GGN).